Reading from the N-terminus, the 145-residue chain is Bacilliredoxin GK1781 (145 aa).

It belongs to the bacilliredoxin family.

The protein is Bacilliredoxin GK1781 of Geobacillus kaustophilus (strain HTA426).